A 284-amino-acid chain; its full sequence is RNA polymerase sigma factor RpoH (284 aa).

The segment at 53-122 (LILSHLRFVI…IHEYVLRNWR (70 aa)) is sigma-70 factor domain-2. Residues 77-80 (DLIQ) carry the Interaction with polymerase core subunit RpoC motif. A sigma-70 factor domain-4 region spans residues 228 to 280 (ALLRLDERSRHIIHARWLDKNKKNTLQNIANNYGISAERVRQLEKNAMKKLKL). Positions 253–272 (LQNIANNYGISAERVRQLEK) form a DNA-binding region, H-T-H motif.

It belongs to the sigma-70 factor family. RpoH subfamily. As to quaternary structure, interacts with the RNA polymerase core enzyme.

The protein localises to the cytoplasm. In terms of biological role, sigma factors are initiation factors that promote the attachment of RNA polymerase to specific initiation sites and are then released. This sigma factor is involved in regulation of expression of heat shock genes. This is RNA polymerase sigma factor RpoH from Buchnera aphidicola subsp. Acyrthosiphon pisum (strain APS) (Acyrthosiphon pisum symbiotic bacterium).